Here is a 345-residue protein sequence, read N- to C-terminus: Beta-hexosaminidase (345 aa).

Substrate contacts are provided by residues Asp60, Arg68, Arg132, and 162-163; that span reads KH. His175 functions as the Proton donor/acceptor in the catalytic mechanism. Catalysis depends on Asp247, which acts as the Nucleophile.

Belongs to the glycosyl hydrolase 3 family. NagZ subfamily.

It localises to the cytoplasm. The enzyme catalyses Hydrolysis of terminal non-reducing N-acetyl-D-hexosamine residues in N-acetyl-beta-D-hexosaminides.. Its pathway is cell wall biogenesis; peptidoglycan recycling. Plays a role in peptidoglycan recycling by cleaving the terminal beta-1,4-linked N-acetylglucosamine (GlcNAc) from peptide-linked peptidoglycan fragments, giving rise to free GlcNAc, anhydro-N-acetylmuramic acid and anhydro-N-acetylmuramic acid-linked peptides. This Actinobacillus pleuropneumoniae serotype 5b (strain L20) protein is Beta-hexosaminidase.